Here is a 300-residue protein sequence, read N- to C-terminus: Geranylgeranyl pyrophosphate synthase (300 aa).

M1 is subject to N-acetylmethionine. Isopentenyl diphosphate contacts are provided by K25, R28, and H57. Residues D64 and D68 each coordinate Mg(2+). Dimethylallyl diphosphate is bound at residue R73. R74 lines the isopentenyl diphosphate pocket. Dimethylallyl diphosphate-binding residues include K151, T152, Q185, K202, and K212.

It belongs to the FPP/GGPP synthase family. As to quaternary structure, homohexamer; trimer of homodimers. Requires Mg(2+) as cofactor.

It localises to the cytoplasm. It is found in the perinuclear region. The protein resides in the myofibril. The protein localises to the sarcomere. Its subcellular location is the z line. It carries out the reaction isopentenyl diphosphate + dimethylallyl diphosphate = (2E)-geranyl diphosphate + diphosphate. The catalysed reaction is isopentenyl diphosphate + (2E)-geranyl diphosphate = (2E,6E)-farnesyl diphosphate + diphosphate. The enzyme catalyses isopentenyl diphosphate + (2E,6E)-farnesyl diphosphate = (2E,6E,10E)-geranylgeranyl diphosphate + diphosphate. Its pathway is isoprenoid biosynthesis; farnesyl diphosphate biosynthesis; farnesyl diphosphate from geranyl diphosphate and isopentenyl diphosphate: step 1/1. It functions in the pathway isoprenoid biosynthesis; geranyl diphosphate biosynthesis; geranyl diphosphate from dimethylallyl diphosphate and isopentenyl diphosphate: step 1/1. It participates in isoprenoid biosynthesis; geranylgeranyl diphosphate biosynthesis; geranylgeranyl diphosphate from farnesyl diphosphate and isopentenyl diphosphate: step 1/1. Functionally, catalyzes the trans-addition of the three molecules of IPP onto DMAPP to form geranylgeranyl pyrophosphate, an important precursor of carotenoids and geranylated proteins. The chain is Geranylgeranyl pyrophosphate synthase (Ggps1) from Rattus norvegicus (Rat).